Reading from the N-terminus, the 443-residue chain is tRNA modification GTPase MnmE (443 aa).

Positions 23, 80, and 120 each coordinate (6S)-5-formyl-5,6,7,8-tetrahydrofolate. Residues 217–367 (GFEVVILGAP…LLAEIGRRAA (151 aa)) enclose the TrmE-type G domain. GTP is bound by residues 227–232 (NAGKSS), 246–252 (TDEPGTT), and 271–274 (DTAG). Ser-231 and Thr-252 together coordinate Mg(2+). Residue Lys-443 participates in (6S)-5-formyl-5,6,7,8-tetrahydrofolate binding.

The protein belongs to the TRAFAC class TrmE-Era-EngA-EngB-Septin-like GTPase superfamily. TrmE GTPase family. In terms of assembly, homodimer. Heterotetramer of two MnmE and two MnmG subunits. K(+) serves as cofactor.

The protein resides in the cytoplasm. Its function is as follows. Exhibits a very high intrinsic GTPase hydrolysis rate. Involved in the addition of a carboxymethylaminomethyl (cmnm) group at the wobble position (U34) of certain tRNAs, forming tRNA-cmnm(5)s(2)U34. In Mesorhizobium japonicum (strain LMG 29417 / CECT 9101 / MAFF 303099) (Mesorhizobium loti (strain MAFF 303099)), this protein is tRNA modification GTPase MnmE.